The chain runs to 119 residues: Large ribosomal subunit protein bL20 (119 aa).

Belongs to the bacterial ribosomal protein bL20 family.

Functionally, binds directly to 23S ribosomal RNA and is necessary for the in vitro assembly process of the 50S ribosomal subunit. It is not involved in the protein synthesizing functions of that subunit. This Anoxybacillus flavithermus (strain DSM 21510 / WK1) protein is Large ribosomal subunit protein bL20.